A 335-amino-acid chain; its full sequence is 2-acylglycerol O-acyltransferase 2-A (335 aa).

2 helical membrane passes run 24–44 (WVFS…VLLF) and 47–67 (FWII…TPSK).

This sequence belongs to the diacylglycerol acyltransferase family.

It localises to the endoplasmic reticulum membrane. The protein resides in the cytoplasm. Its subcellular location is the perinuclear region. It carries out the reaction a 2-acylglycerol + an acyl-CoA = a 1,2-diacylglycerol + CoA. The catalysed reaction is a 2-acylglycerol + an acyl-CoA = a 1,2-diacyl-sn-glycerol + CoA. The enzyme catalyses a 2-acylglycerol + an acyl-CoA = a 2,3-diacyl-sn-glycerol + CoA. It catalyses the reaction a 1-acylglycerol + an acyl-CoA = a 1,2-diacylglycerol + CoA. It carries out the reaction a 1-acylglycerol + an acyl-CoA = a 1,3-diacylglycerol + CoA. The catalysed reaction is 1-O-alkylglycerol + an acyl-CoA = 1-O-alkyl-3-acylglycerol + CoA. The enzyme catalyses an acyl-CoA + a 1,2-diacyl-sn-glycerol = a triacyl-sn-glycerol + CoA. Its pathway is glycerolipid metabolism; triacylglycerol biosynthesis. In terms of biological role, catalyzes the formation of diacylglycerol from 2-monoacylglycerol and fatty acyl-CoA. Functionally, involved in glycerolipid synthesis and lipid metabolism. Catalyzes the formation of diacylglycerol, the precursor of triacylglycerol, by transferring the acyl chain of a fatty acyl-CoA to a monoacylglycerol. Plays a central role in absorption of dietary fat in the small intestine by catalyzing the resynthesis of triacylglycerol in enterocytes. Has a preference toward monoacylglycerols containing unsaturated fatty acids in an order of C18:3 &gt; C18:2 &gt; C18:1 &gt; C18:0 at sn-2. Able to use 1-monoalkylglycerol (1-MAkG, 1-O-alkylglycerol) as an acyl acceptor for the synthesis of monoalkyl-monoacylglycerol (MAMAG, 1-O-alkyl-3-acylglycerol or 1-O-alkyl-2-acylglycerol) and subsequently, with lower efficiency, may add another acyl chain producing monoalkyl-diacylglycerol (MADAG, 1-O-alkyl-2,3-diacylglycerol). Possesses weak but significant activity with diacylglycerol as substrate, producing triacylglycerol (triacyl-sn-glycerol). This Xenopus laevis (African clawed frog) protein is 2-acylglycerol O-acyltransferase 2-A (mogat2-a).